Reading from the N-terminus, the 226-residue chain is Cytidylate kinase (226 aa).

10–18 (GPASSGKST) is a binding site for ATP.

It belongs to the cytidylate kinase family. Type 1 subfamily.

The protein resides in the cytoplasm. The catalysed reaction is CMP + ATP = CDP + ADP. The enzyme catalyses dCMP + ATP = dCDP + ADP. In Streptococcus pyogenes serotype M18 (strain MGAS8232), this protein is Cytidylate kinase.